We begin with the raw amino-acid sequence, 151 residues long: Deoxyuridine 5'-triphosphate nucleotidohydrolase (151 aa).

Substrate contacts are provided by residues 70–72, Asn83, 87–89, and Met97; these read RSG and LID.

The protein belongs to the dUTPase family. Requires Mg(2+) as cofactor.

The catalysed reaction is dUTP + H2O = dUMP + diphosphate + H(+). It participates in pyrimidine metabolism; dUMP biosynthesis; dUMP from dCTP (dUTP route): step 2/2. Functionally, this enzyme is involved in nucleotide metabolism: it produces dUMP, the immediate precursor of thymidine nucleotides and it decreases the intracellular concentration of dUTP so that uracil cannot be incorporated into DNA. The chain is Deoxyuridine 5'-triphosphate nucleotidohydrolase from Shigella flexneri serotype 5b (strain 8401).